The following is a 209-amino-acid chain: High mobility group protein B2 (209 aa).

Residue Lys3 is modified to N6-acetyllysine. Residues 9–79 (PRGKMSSYAF…RYDREMKNYV (71 aa)) constitute a DNA-binding region (HMG box 1). Cys23 is modified (cysteine sulfonic acid (-SO3H); alternate). Cys23 and Cys45 are disulfide-bonded. At Lys30 the chain carries N6-acetyllysine. Ser35 carries the post-translational modification Phosphoserine. Lys43 carries the N6-acetyllysine modification. Cys45 carries the post-translational modification Cysteine sulfonic acid (-SO3H); alternate. Positions 52–76 (MSAKEKSKFEDMAKSDKARYDREMK) are enriched in basic and acidic residues. Disordered regions lie at residues 52–150 (MSAK…KAAK) and 162–209 (YRAK…EDEE). Position 90 is an N6-acetyllysine (Lys90). Residues 95 to 163 (PKRPPSAFFL…KYEKDIAAYR (69 aa)) constitute a DNA-binding region (HMG box 2). Ser100 carries the post-translational modification Phosphoserine. Residue Cys106 is modified to Cysteine sulfonic acid (-SO3H). Composition is skewed to basic and acidic residues over residues 107-117 (SEHRPKIKSEH), 137-150 (SAKDKQPYEQKAAK), and 162-172 (YRAKGKSEAGK). 2 positions are modified to N6-acetyllysine: Lys114 and Lys141. The segment at 165–180 (KGKSEAGKKGPGRPTG) is required for chemotactic activity. Residues 187–209 (PEDEEEEEEEEDEDEEEEDEDEE) show a composition bias toward acidic residues.

The protein belongs to the HMGB family. In terms of assembly, interacts with POU2F2, POU2F1 and POU3F1. Component of the RAG complex composed of core components RAG1 and RAG2, and associated component HMGB1 or HMGB2. Component of the SET complex, composed of at least ANP32A, APEX1, HMGB2, NME1, SET and TREX1. Directly interacts with SET. Interacts with LEF1. Post-translationally, reduction/oxidation of cysteine residues Cys-23, Cys-45 and Cys-106 and a possible intramolecular disulfide bond involving Cys-23 and Cys-45 give rise to different redox forms with specific functional activities in various cellular compartments: 1- fully reduced HMGB2 (HMGB2C23hC45hC106h), 2- disulfide HMGB2 (HMGB2C23-C45C106h) and 3- sulfonyl HMGB2 (HMGB2C23soC45soC106so).

The protein localises to the nucleus. The protein resides in the chromosome. Its subcellular location is the cytoplasm. It is found in the secreted. In terms of biological role, multifunctional protein with various roles in different cellular compartments. May act in a redox sensitive manner. In the nucleus is an abundant chromatin-associated non-histone protein involved in transcription, chromatin remodeling and V(D)J recombination and probably other processes. Binds DNA with a preference to non-canonical DNA structures such as single-stranded DNA. Can bent DNA and enhance DNA flexibility by looping thus providing a mechanism to promote activities on various gene promoters by enhancing transcription factor binding and/or bringing distant regulatory sequences into close proximity. Involved in V(D)J recombination by acting as a cofactor of the RAG complex: acts by stimulating cleavage and RAG protein binding at the 23 bp spacer of conserved recombination signal sequences (RSS). Proposed to be involved in the innate immune response to nucleic acids by acting as a cytoplasmic promiscuous immunogenic DNA/RNA sensor which cooperates with subsequent discriminative sensing by specific pattern recognition receptors. In the extracellular compartment acts as a chemokine. Promotes proliferation and migration of endothelial cells implicating AGER/RAGE. Has antimicrobial activity in gastrointestinal epithelial tissues. Involved in inflammatory response to antigenic stimulus coupled with pro-inflammatory activity. May play a role in germ cell differentiation. Involved in modulation of neurogenesis probably by regulation of neural stem proliferation. Involved in articular cartilage surface maintenance implicating LEF1 and the Wnt/beta-catenin pathway. The chain is High mobility group protein B2 (HMGB2) from Bos taurus (Bovine).